We begin with the raw amino-acid sequence, 278 residues long: Non-haem bromoperoxidase BPO-A2 (278 aa).

The AB hydrolase-1 domain occupies 26–264 (PVVLIHGFPL…GAPHGLLWTH (239 aa)). Residues Ser-99, Asp-229, and His-258 contribute to the active site.

Belongs to the AB hydrolase superfamily. Bacterial non-heme haloperoxidase / perhydrolase family. Homotrimer.

May be a chlorinating enzyme involved in 7-chlorotetracycline biosynthesis. The chain is Non-haem bromoperoxidase BPO-A2 (bpoA2) from Kitasatospora aureofaciens (Streptomyces aureofaciens).